Reading from the N-terminus, the 588-residue chain is Sulfite reductase [NADPH] hemoprotein beta-component (588 aa).

A compositionally biased stretch (basic and acidic residues) spans 1 to 10 (MSDKKQKGLE). The segment at 1–20 (MSDKKQKGLEWQDNPLSDNE) is disordered. [4Fe-4S] cluster-binding residues include cysteine 443, cysteine 449, cysteine 488, and cysteine 492. Cysteine 492 contacts siroheme.

The protein belongs to the nitrite and sulfite reductase 4Fe-4S domain family. In terms of assembly, alpha(8)-beta(8). The alpha component is a flavoprotein, the beta component is a hemoprotein. Siroheme is required as a cofactor. The cofactor is [4Fe-4S] cluster.

It catalyses the reaction hydrogen sulfide + 3 NADP(+) + 3 H2O = sulfite + 3 NADPH + 4 H(+). The protein operates within sulfur metabolism; hydrogen sulfide biosynthesis; hydrogen sulfide from sulfite (NADPH route): step 1/1. Functionally, component of the sulfite reductase complex that catalyzes the 6-electron reduction of sulfite to sulfide. This is one of several activities required for the biosynthesis of L-cysteine from sulfate. This chain is Sulfite reductase [NADPH] hemoprotein beta-component, found in Mannheimia succiniciproducens (strain KCTC 0769BP / MBEL55E).